A 158-amino-acid chain; its full sequence is Endoribonuclease YbeY (158 aa).

The Zn(2+) site is built by histidine 124, histidine 128, and histidine 134.

The protein belongs to the endoribonuclease YbeY family. Zn(2+) serves as cofactor.

The protein resides in the cytoplasm. Single strand-specific metallo-endoribonuclease involved in late-stage 70S ribosome quality control and in maturation of the 3' terminus of the 16S rRNA. This chain is Endoribonuclease YbeY, found in Caldicellulosiruptor bescii (strain ATCC BAA-1888 / DSM 6725 / KCTC 15123 / Z-1320) (Anaerocellum thermophilum).